The following is a 373-amino-acid chain: Transcription factor NF-E2 45 kDa subunit (373 aa).

The tract at residues 1–83 is required for interaction with MAPK8; that stretch reads MSPCPPQQSR…SGFPLPPPPY (83 aa). The segment at 1-206 is transactivation domain; sequence MSPCPPQQSR…PAAETPLALE (206 aa). 2 consecutive short sequence motifs (PXY motif) follow at residues 61 to 65 and 79 to 83; these read PPTTY and PPPPY. The segment at 127–150 is disordered; it reads LDIGLPAGPPKPQEDPESDSGLSL. Residue S157 is modified to Phosphoserine; by MAPK8. At S170 the chain carries Phosphoserine; by PKA. Residues 205–226 form a disordered region; the sequence is LEPSSGPVRAKPTARGEAGSRD. The bZIP domain maps to 266 to 329; that stretch reads LVRDIRRRGK…EVMRQQLTEL (64 aa). The interval 268–287 is basic motif; that stretch reads RDIRRRGKNKVAAQNCRKRK. The segment at 291-298 is leucine-zipper; sequence IVQLEREL. A Glycyl lysine isopeptide (Lys-Gly) (interchain with G-Cter in SUMO1) cross-link involves residue K368.

The protein belongs to the bZIP family. CNC subfamily. In terms of assembly, homodimer; can bind DNA as a homodimer. Erythroid transcription activator nuclear factor erythroid-derived 2 (NF-E2), composed of a heterodimer of NFE2 and MAFK, possesses transactivation activity on beta-globin. Also forms high affinity heterodimer with MAFG; the interaction promotes erythropoiesis. Interacts (via the PXY motif 1) with ITCH (via the WW 1 domain); the interaction promotes 'Lys63'-linked ubiquitination of NFE2, translocates it to the cytoplasm and inhibits its transactivation activity. Interacts with KMT2D/MLL2; the interaction promotes transactivation of the beta-globin locus. Interacts with MAPK8 (phosphorylated form); the interaction leads to phosphorylation of NFE2 in undifferentiated cells. Post-translationally, phosphorylated on serine residues. In undifferentiated erythrocytes, phosphorylated by MAPK8 which then leads to ubiquitination and protein degradation. In terms of processing, sumoylated. Sumoylation is required for translocation to nuclear bodies PODs, anchoring to the gene loci, and transactivation of the beta-globin gene. Ubiquitinated mainly by 'Lys63'-linked ubiquitin. Polyubiquitination with 'Lys63'-linked ubiquitin by ITCH retains NFE2 in the cytoplasm preventing its transactivation activity. In undifferentiated erythrocyte, ubiquitinated after MAPK8-mediatd phosphorylation leading to protein degradation. As to expression, expressed in hematopoietic cells and also in colon and testis.

It localises to the nucleus. The protein localises to the PML body. The protein resides in the cytoplasm. In terms of biological role, component of the NF-E2 complex essential for regulating erythroid and megakaryocytic maturation and differentiation. Binds to the hypersensitive site 2 (HS2) of the beta-globin control region (LCR). This subunit (NFE2) recognizes the TCAT/C sequence of the AP-1-like core palindrome present in a number of erythroid and megakaryocytic gene promoters. Requires MAFK or other small MAF proteins for binding to the NF-E2 motif. May play a role in all aspects of hemoglobin production from globin and heme synthesis to procurement of iron. This Homo sapiens (Human) protein is Transcription factor NF-E2 45 kDa subunit (NFE2).